The sequence spans 631 residues: Nucleoside triphosphatase I (631 aa).

Residues phenylalanine 42–glycine 204 form the Helicase ATP-binding domain. Position 55 to 62 (histidine 55 to threonine 62) interacts with ATP. A DEXH box motif is present at residues aspartate 141–histidine 144. In terms of domain architecture, Helicase C-terminal spans lysine 367 to lysine 532.

This sequence belongs to the helicase family. NPH I subfamily. As to quaternary structure, monomer.

The enzyme catalyses a ribonucleoside 5'-triphosphate + H2O = a ribonucleoside 5'-diphosphate + phosphate + H(+). Functionally, serves two roles in transcription; it acts in concert with viral termination factor/capping enzyme to catalyze release of UUUUUNU-containing nascent RNA from the elongation complex, and it acts by itself as a polymerase elongation factor to facilitate readthrough of intrinsic pause sites. The protein is Nucleoside triphosphatase I (NPH1) of Homo sapiens (Human).